Reading from the N-terminus, the 360-residue chain is MTGSKMLFACLALIAFLHPLVHVASAQECTTPNNKAGKCLGIRVCKPLLEMLQTQGHAAADFLRQSVCKYENNNPIVCCPNEESREDRGILVGNEYEPLRPPHCGFSNVSHTRVVGGKPAVLGAWPWIAALGFRYPRNPALEPLWKCGGSLISSRHVLTAAHCAEINELYVVRIGDLNLVRNDDGAHPVQIEIESKIIHPDYISGVTKHDIAILKLVEEVPFSEYVYPICLPVEDNLRNNNFERYYPFVAGWGSLAHHGPGSDDLMEVQVPVISNTECKNSYARFAAAHVTDTVLCAGYTQGGKDACQGDSGGPLMLPKKFTFYQIGVVSYGHKCAAAGYPGVYTRVTSYLDDFILPAMQ.

The signal sequence occupies residues 1–26 (MTGSKMLFACLALIAFLHPLVHVASA). A propeptide spanning residues 27-113 (QECTTPNNKA…CGFSNVSHTR (87 aa)) is cleaved from the precursor. The 52-residue stretch at 28–79 (ECTTPNNKAGKCLGIRVCKPLLEMLQTQGHAAADFLRQSVCKYENNNPIVCC) folds into the Clip domain. 7 cysteine pairs are disulfide-bonded: cysteine 29–cysteine 78, cysteine 39–cysteine 68, cysteine 45–cysteine 79, cysteine 104–cysteine 230, cysteine 147–cysteine 163, cysteine 278–cysteine 296, and cysteine 307–cysteine 335. A glycan (N-linked (GlcNAc...) asparagine) is linked at asparagine 108. The region spanning 114–360 (VVGGKPAVLG…LDDFILPAMQ (247 aa)) is the Peptidase S1 domain. The Charge relay system role is filled by histidine 162. Ca(2+) contacts are provided by aspartate 176, asparagine 178, arginine 181, and aspartate 184. The active-site Charge relay system is aspartate 210. Serine 311 acts as the Charge relay system in catalysis.

This sequence belongs to the peptidase S1 family. CLIP subfamily. In terms of tissue distribution, expressed by the venom gland.

The protein localises to the secreted. Its function is as follows. Multifunctional venom serine protease. In insects, it acts as an arthropod prophenoloxidase-activating factor, thereby triggering the phenoloxidase cascade. When injected into larvae, it induces a lethal melanization response in target insects by modulating the innate immune response. In mammals, it converts fibrinogen into fibrin, activates prothrombin, and also degrades fibrin. In mammal, it may act in a cooperative manner with the serine protease inhibitor Bi-KTI (AC G3LH89) to promote the spread of bee venom under anti-bleeding conditions. This Bombus ignitus (Bumblebee) protein is Venom serine protease Bi-VSP.